Reading from the N-terminus, the 143-residue chain is Small ribosomal subunit protein uS11c (143 aa).

The protein belongs to the universal ribosomal protein uS11 family. As to quaternary structure, part of the 30S ribosomal subunit.

It is found in the plastid. It localises to the chloroplast. This Oryza nivara (Indian wild rice) protein is Small ribosomal subunit protein uS11c.